A 222-amino-acid polypeptide reads, in one-letter code: Tetratricopeptide repeat protein 9A (222 aa).

Disordered stretches follow at residues M1–E49 and K88–S116. Residues R56–G89 form a TPR 1 repeat. S105 carries the post-translational modification Phosphoserine. TPR repeat units follow at residues A125 to E160 and G161 to Q194.

Belongs to the TTC9 family.

The protein is Tetratricopeptide repeat protein 9A (TTC9) of Homo sapiens (Human).